The primary structure comprises 348 residues: Flap endonuclease 1 (348 aa).

Residues 1-98 are N-domain; sequence MGLAELRELI…ETLERRRERK (98 aa). Residues D28, D80, E149, E151, D170, D172, and D234 each coordinate Mg(2+). The interval 113 to 256 is I-domain; it reads EREKYARQVA…RALQLIRKYG (144 aa). Positions 340–348 are interaction with PCNA; it reads RQETLDAFF.

Belongs to the XPG/RAD2 endonuclease family. FEN1 subfamily. In terms of assembly, interacts with PCNA. PCNA stimulates the nuclease activity without altering cleavage specificity. Requires Mg(2+) as cofactor.

Functionally, structure-specific nuclease with 5'-flap endonuclease and 5'-3' exonuclease activities involved in DNA replication and repair. During DNA replication, cleaves the 5'-overhanging flap structure that is generated by displacement synthesis when DNA polymerase encounters the 5'-end of a downstream Okazaki fragment. Binds the unpaired 3'-DNA end and kinks the DNA to facilitate 5' cleavage specificity. Cleaves one nucleotide into the double-stranded DNA from the junction in flap DNA, leaving a nick for ligation. Also involved in the base excision repair (BER) pathway. Acts as a genome stabilization factor that prevents flaps from equilibrating into structures that lead to duplications and deletions. Also possesses 5'-3' exonuclease activity on nicked or gapped double-stranded DNA. This chain is Flap endonuclease 1, found in Methanopyrus kandleri (strain AV19 / DSM 6324 / JCM 9639 / NBRC 100938).